The following is a 1119-amino-acid chain: Agglutinin-like protein 3 (1119 aa).

Residues 1–17 (MLQQYTLLLIYLSVATA) form the signal peptide. Disulfide bonds link Cys-73–Cys-150, Cys-96–Cys-112, Cys-205–Cys-298, and Cys-227–Cys-256. ALS repeat units follow at residues 365-396 (TTIT…VDIP), 401-432 (TTVT…VQVP), and 438-469 (VTTT…IREP). N-linked (GlcNAc...) asparagine glycosylation occurs at Asn-471. ALS repeat units follow at residues 474-505 (VTTT…IKEP) and 510-541 (VTTT…IKEP). N-linked (GlcNAc...) asparagine glycosylation occurs at Asn-543. The stretch at 546-577 (VTTTEYWSQSYTTTTTVTAPPGGTDTVLVREP) is one ALS 6 repeat. Residue Asn-579 is glycosylated (N-linked (GlcNAc...) asparagine). 2 ALS repeats span residues 582 to 613 (VTTT…IREP) and 618 to 649 (VTTT…IREP). N-linked (GlcNAc...) asparagine glycosylation is present at Asn-651. Residues 654–685 (VTTTEYWSQSYATTTTITAPPGETDTVLIREP) form an ALS 9 repeat. N-linked (GlcNAc...) asparagine glycosylation is present at Asn-687. One copy of the ALS 10 repeat lies at 690–721 (VTTTEYWSQSFATTTTVTAPPGGTDTVIIREP). N-linked (GlcNAc...) asparagine glycosylation is present at Asn-723. An ALS 11 repeat occupies 726-757 (VTTTEYWSQSYATTTTITAPPGETDTVLIREP). The N-linked (GlcNAc...) asparagine glycan is linked to Asn-759. ALS repeat units lie at residues 762–793 (VTTT…IREP) and 798–827 (VTTT…VIIY). Asn-845 carries N-linked (GlcNAc...) asparagine glycosylation. A disordered region spans residues 892–1077 (MVTNTVDSTT…QYNSDTQQTT (186 aa)). Low complexity predominate over residues 894-929 (TNTVDSTTTESTSQSPSGIFSESGVSVETESSTVTT). Composition is skewed to polar residues over residues 930–941 (AQTNPSVPTTES) and 947–965 (TKGN…NVKS). Low complexity predominate over residues 974 to 983 (TTSTAASTST). N-linked (GlcNAc...) asparagine glycosylation occurs at Asn-987. 2 stretches are compositionally biased toward low complexity: residues 998-1022 (ASSP…STSV) and 1035-1048 (APSA…TTTA). 2 N-linked (GlcNAc...) asparagine glycosylation sites follow: Asn-1050 and Asn-1061. Over residues 1057 to 1077 (TTSTNQSQSQSQYNSDTQQTT) the composition is skewed to low complexity. Ser-1098 carries the GPI-anchor amidated serine lipid modification. The propeptide at 1099-1119 (GSVIQHSTWLCGLITLLSLFI) is removed in mature form.

The protein belongs to the ALS family. The GPI-anchor is attached to the protein in the endoplasmic reticulum and serves to target the protein to the cell surface. There, the glucosamine-inositol phospholipid moiety is cleaved off and the GPI-modified mannoprotein is covalently attached via its lipidless GPI glycan remnant to the 1,6-beta-glucan of the outer cell wall layer.

It localises to the cell membrane. Its subcellular location is the secreted. It is found in the cell wall. In terms of biological role, cell surface adhesion protein which mediates both yeast-to-host tissue adherence and yeast aggregation. Plays an important role in the biofilm formation and pathogenesis of C.albicans infections. Necessary for C.albicans to bind to N-cadherin on endothelial cells and E-cadherin on oral epithelial cells and subsequent endocytosis by these cells. During disseminated infection, mediates initial trafficking to the brain and renal cortex and contributes to fungal persistence in the kidneys. This chain is Agglutinin-like protein 3 (ALS3), found in Candida albicans (Yeast).